Reading from the N-terminus, the 130-residue chain is Glycine cleavage system H protein (130 aa).

The Lipoyl-binding domain occupies 24-106; that stretch reads TLTIGITDHA…YGEGWIMRIR (83 aa). Lysine 65 is modified (N6-lipoyllysine). A disordered region spans residues 111-130; that stretch reads DDLEQLLDPEDYQDLVADEE.

It belongs to the GcvH family. In terms of assembly, the glycine cleavage system is composed of four proteins: P, T, L and H. Requires (R)-lipoate as cofactor.

Functionally, the glycine cleavage system catalyzes the degradation of glycine. The H protein shuttles the methylamine group of glycine from the P protein to the T protein. This chain is Glycine cleavage system H protein, found in Alkalilimnicola ehrlichii (strain ATCC BAA-1101 / DSM 17681 / MLHE-1).